The chain runs to 218 residues: uncharacterized protein (218 aa).

A helical transmembrane segment spans residues 11–31; that stretch reads AAGLFPLALMLSGCISYALVS.

It is found in the membrane. This is an uncharacterized protein from Escherichia coli (strain K12).